The sequence spans 895 residues: Catenin alpha-3 (895 aa).

Residues 74–107 are a coiled coil; it reads EMIAKEATVLKEELAAALQEVRKESKALKVSAER. Serine 160 carries the phosphoserine modification. Positions 325-379 form a coiled coil; sequence RERIIAECNAIRQALQDLLTEYMSNTGKTERSNTLNTAIVNMSKKTRDLRRQLRK. Threonine 361 is subject to Phosphothreonine. The disordered stretch occupies residues 635 to 660; that stretch reads DVSDLEDDHEVRSHTSIQTEGKTDRA. 2 positions are modified to phosphoserine: serine 637 and serine 647. Position 649 is a phosphothreonine (threonine 649).

This sequence belongs to the vinculin/alpha-catenin family. Interacts with CTNNB1. Interacts with PKP2. Expressed in heart (at protein level).

Its subcellular location is the cytoplasm. The protein localises to the cytoskeleton. It localises to the cell junction. The protein resides in the desmosome. In terms of biological role, may be involved in formation of stretch-resistant cell-cell adhesion complexes. This chain is Catenin alpha-3, found in Mus musculus (Mouse).